A 289-amino-acid polypeptide reads, in one-letter code: Epoxyqueuosine reductase (289 aa).

The Proton donor role is filled by Asp-111. The 30-residue stretch at 156–185 (QGDRPHSQHCGTCTRCLEACPTQAIVEPFV) folds into the 4Fe-4S ferredoxin-type domain. Residues Cys-165, Cys-168, Cys-171, Cys-175, Cys-191, Cys-219, Cys-222, and Cys-226 each contribute to the [4Fe-4S] cluster site.

Belongs to the QueG family. In terms of assembly, monomer. Cob(II)alamin is required as a cofactor. The cofactor is [4Fe-4S] cluster.

The protein resides in the cytoplasm. The enzyme catalyses epoxyqueuosine(34) in tRNA + AH2 = queuosine(34) in tRNA + A + H2O. Its pathway is tRNA modification; tRNA-queuosine biosynthesis. Functionally, catalyzes the conversion of epoxyqueuosine (oQ) to queuosine (Q), which is a hypermodified base found in the wobble positions of tRNA(Asp), tRNA(Asn), tRNA(His) and tRNA(Tyr). The chain is Epoxyqueuosine reductase from Synechocystis sp. (strain ATCC 27184 / PCC 6803 / Kazusa).